A 372-amino-acid polypeptide reads, in one-letter code: 2-aminoethylphosphonate--pyruvate transaminase 2 (372 aa).

Lys-192 carries the post-translational modification N6-(pyridoxal phosphate)lysine.

This sequence belongs to the class-V pyridoxal-phosphate-dependent aminotransferase family. PhnW subfamily. As to quaternary structure, homodimer. Pyridoxal 5'-phosphate serves as cofactor.

It carries out the reaction (2-aminoethyl)phosphonate + pyruvate = phosphonoacetaldehyde + L-alanine. Functionally, involved in phosphonate degradation. The sequence is that of 2-aminoethylphosphonate--pyruvate transaminase 2 from Polaromonas sp. (strain JS666 / ATCC BAA-500).